A 569-amino-acid chain; its full sequence is MSEENNHKEKSKNEIKKEKKKIEKEKKITELKSKKKINEKNNTINYDDDDDNDDDNFKNKKWGEINNENYKEIIKNRFVKEWSNISDLNESCVGKYVLIRARVSNIRSFGNSLCFLQLRDGLSSIQAVISKNDENNSKSMIHFINSTITKESIIDIEAILTNSSTPIESCIIKNLELKIYSLFLQSKSNSSLPLQFDDLSKPTTYQNYDDNGYTYVIPLNSRLNNRCLDLRTFYNLSIFKIQSAISNLFRDQLLINDFIEIHSPKIIKQSINENSFKLNYFNEIAYLSESTQFYRQLAIVSDFKRVFEIGPVYRTDLGHTHRHLNEFTSLDFEMTFKDHYHEVLDFLDNLMISIFKILETNYENELKIINNYQLQFEKFKFSTKTPRFTFSEVKLMLIEFSENENNKFCMELFDYLNVQEERIFGKIVKEKFNVDYYIIEKPSSEYQPFYIMPDSNNEKLLNSFHIYINGEKIGSGSQRIHDWKLLEKRYKNYYINHNNNNNNNNNNNNNNNNNNNNNNIENYINIFKFGCSQHAGCSIGLERLVMAYLGLENIRKASFCPRDPTRLTP.

The disordered stretch occupies residues 1-23 (MSEENNHKEKSKNEIKKEKKKIE). Positions 292-295 (QFYR) are aspartate. R314 lines the L-aspartate pocket. ATP-binding positions include 314-316 (RTD) and 322-324 (RHL). S475 and R479 together coordinate L-aspartate. Residue 540 to 543 (GLER) coordinates ATP.

It belongs to the class-II aminoacyl-tRNA synthetase family. Type 2 subfamily.

The protein localises to the cytoplasm. The catalysed reaction is tRNA(Asp) + L-aspartate + ATP = L-aspartyl-tRNA(Asp) + AMP + diphosphate. In Dictyostelium discoideum (Social amoeba), this protein is Aspartate--tRNA ligase, cytoplasmic 2 (aspS2).